The following is a 326-amino-acid chain: MSKSNQKIASIEQLSNNEGIISALAFDQRGALKRMMAKHQTEEPTVAQIEQLKVLVAEELTQYASSILLDPEYGLPASDARNKDCGLLLAYEKTGYDVNAKGRLPDCLVEWSAKRLKEQGANAVKFLLYYDVDDTEEINVQKKAYIERIGSECVAEDIPFFLEVLTYDDNIPDNGSVEFAKVKPRKVNEAMKLFSEPRFNVDVLKVEVPVNMKYVEGFAEGEVVYTKEEAAQHFKDQDVATHLPYIYLSAGVSAELFQETLKFAHEAGAKFNGVLCGRATWSGAVQVYIEQGEDAAREWLRTTGFKNIDDLNKVLKDTATSWKQRK.

The protein belongs to the aldolase LacD family.

The catalysed reaction is D-tagatofuranose 1,6-bisphosphate = D-glyceraldehyde 3-phosphate + dihydroxyacetone phosphate. It functions in the pathway carbohydrate metabolism; D-tagatose 6-phosphate degradation; D-glyceraldehyde 3-phosphate and glycerone phosphate from D-tagatose 6-phosphate: step 2/2. This is Tagatose 1,6-diphosphate aldolase from Staphylococcus aureus (strain bovine RF122 / ET3-1).